We begin with the raw amino-acid sequence, 429 residues long: Serine hydroxymethyltransferase (429 aa).

Residues leucine 126 and 130-132 (GHL) contribute to the (6S)-5,6,7,8-tetrahydrofolate site. The residue at position 235 (lysine 235) is an N6-(pyridoxal phosphate)lysine. 359 to 361 (SPF) contacts (6S)-5,6,7,8-tetrahydrofolate.

Belongs to the SHMT family. In terms of assembly, homodimer. It depends on pyridoxal 5'-phosphate as a cofactor.

It is found in the cytoplasm. The enzyme catalyses (6R)-5,10-methylene-5,6,7,8-tetrahydrofolate + glycine + H2O = (6S)-5,6,7,8-tetrahydrofolate + L-serine. It participates in one-carbon metabolism; tetrahydrofolate interconversion. It functions in the pathway amino-acid biosynthesis; glycine biosynthesis; glycine from L-serine: step 1/1. Functionally, catalyzes the reversible interconversion of serine and glycine with tetrahydrofolate (THF) serving as the one-carbon carrier. This reaction serves as the major source of one-carbon groups required for the biosynthesis of purines, thymidylate, methionine, and other important biomolecules. Also exhibits THF-independent aldolase activity toward beta-hydroxyamino acids, producing glycine and aldehydes, via a retro-aldol mechanism. The polypeptide is Serine hydroxymethyltransferase (Parasynechococcus marenigrum (strain WH8102)).